The following is a 385-amino-acid chain: Trichodiene synthase (385 aa).

Belongs to the trichodiene synthase family.

It catalyses the reaction (2E,6E)-farnesyl diphosphate = trichodiene + diphosphate. It functions in the pathway sesquiterpene biosynthesis; trichothecene biosynthesis. In terms of biological role, TS is a member of the terpene cyclase group of enzymes. It catalyzes the isomerization and cyclization of farnesyl pyro-phosphate to form trichodiene, the first cyclic intermediate in the biosynthetic pathway for trichothecenes. It serves to branch trichothecene biosynthesis from the isoprenoid pathway. The chain is Trichodiene synthase (TRI5) from Paramyrothecium roridum (Myrothecium leaf spot fungus).